The following is a 64-amino-acid chain: Alpha-conotoxin-like Lp1.8 (64 aa).

The N-terminal stretch at 1 to 21 is a signal peptide; it reads MGMRMMFTMFLLVVLTTTVVS. The propeptide occupies 22–41; the sequence is FNSDRESNHENRRTSNQITR. 2 cysteine pairs are disulfide-bonded: Cys47–Cys53 and Cys48–Cys61. The lacks the Ser-Xaa-Pro motif that is crucial for potent interaction with nAChR stretch occupies residues 49–51; it reads KDP.

It belongs to the conotoxin A superfamily. Expressed by the venom duct.

Its subcellular location is the secreted. Functionally, alpha-conotoxins act on postsynaptic membranes, they bind to the nicotinic acetylcholine receptors (nAChR) and thus inhibit them. Has possibly a distinct nAChR binding mode from other alpha-conotoxins, due to a different three residue motif (Lys-Xaa-Pro instead of the conserved Ser-Xaa-Pro motif). The polypeptide is Alpha-conotoxin-like Lp1.8 (Conus leopardus (Leopard cone)).